We begin with the raw amino-acid sequence, 102 residues long: MEMKKWSYANLITLALLFLFFIILLLAFQGGSRDDDHQHVHVAIRTKDISMGRKLKSLKPINPTKKNGFEYPDQGSHDVQEREVYVELRDYGQRKYKPPVHN.

An N-terminal signal peptide occupies residues 1-27 (MEMKKWSYANLITLALLFLFFIILLLA). The propeptide occupies 28–89 (FQGGSRDDDH…QEREVYVELR (62 aa)). The segment at 56-78 (KSLKPINPTKKNGFEYPDQGSHD) is disordered. Tyrosine 91 carries the post-translational modification Sulfotyrosine. A Hydroxyproline modification is found at proline 99.

It belongs to the RGF family. Binds to LRR receptor-like serine/threonine-protein kinases to trigger their dimerization with SERK proteins and subsequent signaling. As to expression, expressed in roots and sepals.

The protein localises to the secreted. Its function is as follows. Signaling peptide (root growth factor) that promotes root hairs formation and growth. Maintains the postembryonic root stem cell niche. Regulates the pattern of root growth and lateral root development by modulating the length and the number of cortical cells in the root apical meristem (RAM), and the anticlinal asymmetric cell divisions in lateral root initiation cells. This Arabidopsis thaliana (Mouse-ear cress) protein is Protein GOLVEN 4.